We begin with the raw amino-acid sequence, 289 residues long: MDFSKDIILDNVSYTYAKKTPFEFKALNNTSLKFKKNKVTCVIGTTGSGKSTMIQLTNGLIITETGQTIVGDYAIPANIKKIKEVKRLRKEIGLVFQFPEYQLFQETIEKDIAFGPVNLGENKQEAYKKVPELLKLVQLPEDYVKRSPFELSGGQKRRVALAGIIAMDGNTLVLDEPTGGLDPKGEEDFINLFERLNKEYKKRIIMVTHNMDQVLRIADEVIVMHEGKVIDIGSPFEIFSNIELLTKIEIDPPKLYQLMYKLKNKGIDLLNKNIRTIEEFASELAKVLK.

The 245-residue stretch at 7–251 (IILDNVSYTY…IELLTKIEID (245 aa)) folds into the ABC transporter domain. 44–51 (GTTGSGKS) lines the ATP pocket.

Belongs to the ABC transporter superfamily. Energy-coupling factor EcfA family. As to quaternary structure, forms a stable energy-coupling factor (ECF) transporter complex composed of 2 membrane-embedded substrate-binding proteins (S component), 2 ATP-binding proteins (A component) and 2 transmembrane proteins (T component).

It localises to the cell membrane. Functionally, ATP-binding (A) component of a common energy-coupling factor (ECF) ABC-transporter complex. Unlike classic ABC transporters this ECF transporter provides the energy necessary to transport a number of different substrates. The protein is Energy-coupling factor transporter ATP-binding protein EcfA2 of Mycoplasma capricolum subsp. capricolum (strain California kid / ATCC 27343 / NCTC 10154).